A 168-amino-acid chain; its full sequence is DAZ-associated protein 2 (168 aa).

Residues 1–13 show a composition bias toward low complexity; the sequence is MNSKGQYPTQPTY. The segment at 1-25 is disordered; sequence MNSKGQYPTQPTYPVQPPGNPVYPQ. Positions 39–42 match the PPAY motif; sequence PPAY. S77 bears the Phosphoserine mark.

As to quaternary structure, interacts with SOX6. Interacts with DAZ1 and DAZL. Interacts with IL17RB. May interact with FAM168B. Interacts with INCA1. Interacts with EIF4G1 and EIF4G2. Interacts (via PPAY motif) with NEDD4 (via WW domains). Interacts with transcription factor TCF4; the interaction results in localization of DAZAP2 to the nucleus. Interacts with transcription factors TCF7 and TCF7L1. Interacts with transcription factor LEF1. Interacts with serine/threonine-protein kinase HIPK2; the interaction results in phosphorylation of DAZAP2 which causes localization of DAZAP2 to the nucleus, reduces interaction of DAZAP2 with HIPK2 and prevents DAZAP2-dependent degradation of HIPK2. Interacts with ubiquitin ligase SIAH1; the interaction is decreased following phosphorylation of DAZAP2 by HIPK2. Interacts with TP53; the interaction is triggered by DNA damage. Ubiquitinated by SMURF2, leading to proteasomal degradation. Ubiquitinated by NEDD4, leading to proteasomal degradation. Post-translationally, following DNA damage, phosphorylated by HIPK2 which promotes DAZAP2 localization to the nucleus, reduces interaction of DAZAP2 with HIPK2 and SIAH1, and prevents DAZAP2-dependent ubiquitination of HIPK2 by E3 ubiquitin-protein ligase SIAH1 and subsequent HIPK2 proteasomal degradation.

Its subcellular location is the cytoplasm. It localises to the nucleus. The protein localises to the nucleus speckle. It is found in the nuclear body. The protein resides in the stress granule. Functionally, in unstressed cells, promotes SIAH1-mediated polyubiquitination and degradation of the serine/threonine-protein kinase HIPK2, probably by acting as a loading factor that potentiates complex formation between HIPK2 and ubiquitin ligase SIAH1. In response to DNA damage, localizes to the nucleus following phosphorylation by HIPK2 and modulates the expression of a subset of TP53/p53 target genes by binding to TP53 at target gene promoters. This limits the expression of a number of cell death-mediating TP53 target genes, reducing DNA damage-induced cell death. Enhances the binding of transcription factor TCF7L2/TCF4, a Wnt signaling pathway effector, to the promoters of target genes. Plays a role in stress granule formation. This is DAZ-associated protein 2 from Rattus norvegicus (Rat).